The primary structure comprises 663 residues: DNA ligase (663 aa).

NAD(+) is bound by residues 33 to 37 (DQEFD), 82 to 83 (SL), and E113. The N6-AMP-lysine intermediate role is filled by K115. Residues R136, E170, K286, and K310 each coordinate NAD(+). Residues C404, C407, C422, and C427 each coordinate Zn(2+). In terms of domain architecture, BRCT spans 587–663 (SSDPSLTGKL…IEESDLEDFL (77 aa)).

It belongs to the NAD-dependent DNA ligase family. LigA subfamily. The cofactor is Mg(2+). Mn(2+) is required as a cofactor.

The enzyme catalyses NAD(+) + (deoxyribonucleotide)n-3'-hydroxyl + 5'-phospho-(deoxyribonucleotide)m = (deoxyribonucleotide)n+m + AMP + beta-nicotinamide D-nucleotide.. DNA ligase that catalyzes the formation of phosphodiester linkages between 5'-phosphoryl and 3'-hydroxyl groups in double-stranded DNA using NAD as a coenzyme and as the energy source for the reaction. It is essential for DNA replication and repair of damaged DNA. In Natranaerobius thermophilus (strain ATCC BAA-1301 / DSM 18059 / JW/NM-WN-LF), this protein is DNA ligase.